The following is a 651-amino-acid chain: BTB/POZ domain-containing protein At3g44820 (651 aa).

One can recognise a BTB domain in the interval 25-96; that stretch reads SDITVVVDDV…CYGARVDITS (72 aa). The 299-residue stretch at 211-509 folds into the NPH3 domain; that stretch reads DWWYEDISYL…LQVLFFEQMH (299 aa). Residues 611 to 651 form a disordered region; sequence DAKNDTVQNSVSSTPRSATADHTLPRSSRHSKHRKSFSFFG. Polar residues predominate over residues 615–627; the sequence is DTVQNSVSSTPRS. Residues 637–651 show a composition bias toward basic residues; the sequence is SSRHSKHRKSFSFFG.

This sequence belongs to the NPH3 family.

The protein operates within protein modification; protein ubiquitination. Its function is as follows. May act as a substrate-specific adapter of an E3 ubiquitin-protein ligase complex (CUL3-RBX1-BTB) which mediates the ubiquitination and subsequent proteasomal degradation of target proteins. The protein is BTB/POZ domain-containing protein At3g44820 of Arabidopsis thaliana (Mouse-ear cress).